Here is a 57-residue protein sequence, read N- to C-terminus: Large ribosomal subunit protein bL32 (57 aa).

The segment covering Met-1–Trp-20 has biased composition (basic residues). A disordered region spans residues Met-1–Ala-24.

The protein belongs to the bacterial ribosomal protein bL32 family.

The chain is Large ribosomal subunit protein bL32 from Gloeothece citriformis (strain PCC 7424) (Cyanothece sp. (strain PCC 7424)).